Consider the following 376-residue polypeptide: Putative aryl-alcohol dehydrogenase AAD14 (376 aa).

Catalysis depends on Tyr76, which acts as the Proton donor. His151 is a binding site for substrate. 236–246 provides a ligand contact to NADP(+); it reads DVMGGGRFQSK.

It belongs to the aldo/keto reductase family. Aldo/keto reductase 2 subfamily.

The sequence is that of Putative aryl-alcohol dehydrogenase AAD14 (AAD14) from Saccharomyces cerevisiae (strain ATCC 204508 / S288c) (Baker's yeast).